The chain runs to 193 residues: Peptidyl-tRNA hydrolase (193 aa).

Y18 contacts tRNA. Catalysis depends on H23, which acts as the Proton acceptor. TRNA is bound by residues F69, N71, and N117.

This sequence belongs to the PTH family. As to quaternary structure, monomer.

The protein localises to the cytoplasm. It catalyses the reaction an N-acyl-L-alpha-aminoacyl-tRNA + H2O = an N-acyl-L-amino acid + a tRNA + H(+). Its function is as follows. Hydrolyzes ribosome-free peptidyl-tRNAs (with 1 or more amino acids incorporated), which drop off the ribosome during protein synthesis, or as a result of ribosome stalling. In terms of biological role, catalyzes the release of premature peptidyl moieties from peptidyl-tRNA molecules trapped in stalled 50S ribosomal subunits, and thus maintains levels of free tRNAs and 50S ribosomes. This Teredinibacter turnerae (strain ATCC 39867 / T7901) protein is Peptidyl-tRNA hydrolase.